Reading from the N-terminus, the 524-residue chain is Cytochrome P450 4F3 (524 aa).

The chain crosses the membrane as a helical span at residues 15–35 (AASPWLLLLLVGASCLLAYIL). C468 lines the heme pocket.

This sequence belongs to the cytochrome P450 family. Heme serves as cofactor.

It is found in the endoplasmic reticulum membrane. It localises to the microsome membrane. It carries out the reaction leukotriene B4 + reduced [NADPH--hemoprotein reductase] + O2 = 18-hydroxy-leukotriene B4 + oxidized [NADPH--hemoprotein reductase] + H2O + H(+). The catalysed reaction is leukotriene B4 + reduced [NADPH--hemoprotein reductase] + O2 = 19-hydroxy-leukotriene B4 + oxidized [NADPH--hemoprotein reductase] + H2O + H(+). It participates in lipid metabolism; leukotriene B4 degradation. A cytochrome P450 monooxygenase involved in the metabolism of the pro-inflammatory lipid mediator leukotriene B4 (LTB4). Hydroxylates at the omega-1 and omega-2 positions LTB4. This oxidation step leads to LTB4 inactivation, which is postulated to be a crucial part of the resolution of inflammation. Mechanistically, uses molecular oxygen inserting one oxygen atom into a substrate, and reducing the second into a water molecule, with two electrons provided by NADPH via cytochrome P450 reductase (CPR; NADPH-ferrihemoprotein reductase). This Rattus norvegicus (Rat) protein is Cytochrome P450 4F3.